Consider the following 232-residue polypeptide: RNA chaperone ProQ (232 aa).

Residues 105–182 are disordered; it reads EAKARVQAQR…REEQHTPVSD (78 aa). Residues 117–136 show a composition bias toward basic and acidic residues; that stretch reads QQAKKREAAAAAGEKEDAPR. A compositionally biased stretch (basic residues) spans 137-146; sequence RERKPRPTTP. A compositionally biased stretch (basic and acidic residues) spans 147-177; that stretch reads RRKEGAERKPRAQKPVEKAPKTAKAPREEQH.

Belongs to the ProQ family.

It is found in the cytoplasm. Its function is as follows. RNA chaperone with significant RNA binding, RNA strand exchange and RNA duplexing activities. May regulate ProP activity through an RNA-based, post-transcriptional mechanism. The sequence is that of RNA chaperone ProQ from Shigella dysenteriae serotype 1 (strain Sd197).